Here is a 38-residue protein sequence, read N- to C-terminus: Photosystem II reaction center protein L (38 aa).

A helical transmembrane segment spans residues 17 to 37; that stretch reads SLYWGLLLIFVLAVLFSSYIF.

Belongs to the PsbL family. In terms of assembly, PSII is composed of 1 copy each of membrane proteins PsbA, PsbB, PsbC, PsbD, PsbE, PsbF, PsbH, PsbI, PsbJ, PsbK, PsbL, PsbM, PsbT, PsbY, PsbZ, Psb30/Ycf12, at least 3 peripheral proteins of the oxygen-evolving complex and a large number of cofactors. It forms dimeric complexes.

The protein resides in the plastid. The protein localises to the chloroplast thylakoid membrane. Its function is as follows. One of the components of the core complex of photosystem II (PSII). PSII is a light-driven water:plastoquinone oxidoreductase that uses light energy to abstract electrons from H(2)O, generating O(2) and a proton gradient subsequently used for ATP formation. It consists of a core antenna complex that captures photons, and an electron transfer chain that converts photonic excitation into a charge separation. This subunit is found at the monomer-monomer interface and is required for correct PSII assembly and/or dimerization. The polypeptide is Photosystem II reaction center protein L (Euglena gracilis).